The sequence spans 220 residues: Guanylate kinase (220 aa).

The region spanning Gly15 to Lys194 is the Guanylate kinase-like domain. Position 22–29 (Ser22–Ser29) interacts with ATP.

This sequence belongs to the guanylate kinase family.

The protein localises to the cytoplasm. The catalysed reaction is GMP + ATP = GDP + ADP. Its function is as follows. Essential for recycling GMP and indirectly, cGMP. The sequence is that of Guanylate kinase from Rhizobium johnstonii (strain DSM 114642 / LMG 32736 / 3841) (Rhizobium leguminosarum bv. viciae).